The primary structure comprises 327 residues: Phenylalanine--tRNA ligase alpha subunit (327 aa).

Glutamate 252 contacts Mg(2+).

It belongs to the class-II aminoacyl-tRNA synthetase family. Phe-tRNA synthetase alpha subunit type 1 subfamily. In terms of assembly, tetramer of two alpha and two beta subunits. Requires Mg(2+) as cofactor.

Its subcellular location is the cytoplasm. The catalysed reaction is tRNA(Phe) + L-phenylalanine + ATP = L-phenylalanyl-tRNA(Phe) + AMP + diphosphate + H(+). In Cronobacter sakazakii (strain ATCC BAA-894) (Enterobacter sakazakii), this protein is Phenylalanine--tRNA ligase alpha subunit.